The following is a 337-amino-acid chain: Ribonucleoside-diphosphate reductase small subunit (337 aa).

The tract at residues 1–22 (MDPAVSPASTDPLDTHASGAGA) is disordered. Residues Asp91, Glu121, and His124 each contribute to the Fe cation site. Tyr128 is a catalytic residue. A helical membrane pass occupies residues 177–197 (FILMILIEGVFFAASFAAIAY). Fe cation is bound by residues Glu184, Glu218, and His221.

It belongs to the ribonucleoside diphosphate reductase small chain family. In terms of assembly, heterotetramer composed of a homodimer of the large subunit (R1) and a homodimer of the small subunit (R2). Larger multisubunit protein complex are also active, composed of (R1)n(R2)n. It depends on Fe cation as a cofactor.

The protein localises to the host membrane. It catalyses the reaction a 2'-deoxyribonucleoside 5'-diphosphate + [thioredoxin]-disulfide + H2O = a ribonucleoside 5'-diphosphate + [thioredoxin]-dithiol. Its function is as follows. Ribonucleoside-diphosphate reductase holoenzyme provides the precursors necessary for viral DNA synthesis. Allows virus growth in non-dividing cells, as well as reactivation from latency in infected hosts. Catalyzes the biosynthesis of deoxyribonucleotides from the corresponding ribonucleotides. The protein is Ribonucleoside-diphosphate reductase small subunit of Human herpesvirus 2 (strain 333) (HHV-2).